A 461-amino-acid polypeptide reads, in one-letter code: Cysteine--tRNA ligase (461 aa).

Residue C28 coordinates Zn(2+). The 'HIGH' region motif lies at I30 to H40. Residues C209, H234, and E238 each contribute to the Zn(2+) site. A 'KMSKS' region motif is present at residues K266–S270. Position 269 (K269) interacts with ATP.

This sequence belongs to the class-I aminoacyl-tRNA synthetase family. As to quaternary structure, monomer. Zn(2+) is required as a cofactor.

It localises to the cytoplasm. The catalysed reaction is tRNA(Cys) + L-cysteine + ATP = L-cysteinyl-tRNA(Cys) + AMP + diphosphate. The sequence is that of Cysteine--tRNA ligase from Pectobacterium carotovorum subsp. carotovorum (strain PC1).